The sequence spans 141 residues: Nucleoside diphosphate kinase (141 aa).

ATP contacts are provided by K11, F59, R87, T93, R104, and N114. H117 serves as the catalytic Pros-phosphohistidine intermediate.

It belongs to the NDK family. Homotetramer. The cofactor is Mg(2+).

Its subcellular location is the cytoplasm. The catalysed reaction is a 2'-deoxyribonucleoside 5'-diphosphate + ATP = a 2'-deoxyribonucleoside 5'-triphosphate + ADP. The enzyme catalyses a ribonucleoside 5'-diphosphate + ATP = a ribonucleoside 5'-triphosphate + ADP. Major role in the synthesis of nucleoside triphosphates other than ATP. The ATP gamma phosphate is transferred to the NDP beta phosphate via a ping-pong mechanism, using a phosphorylated active-site intermediate. The protein is Nucleoside diphosphate kinase of Bdellovibrio bacteriovorus (strain ATCC 15356 / DSM 50701 / NCIMB 9529 / HD100).